The chain runs to 465 residues: ATP synthase subunit beta (465 aa).

152-159 is a binding site for ATP; that stretch reads GGAGVGKT.

This sequence belongs to the ATPase alpha/beta chains family. F-type ATPases have 2 components, CF(1) - the catalytic core - and CF(0) - the membrane proton channel. CF(1) has five subunits: alpha(3), beta(3), gamma(1), delta(1), epsilon(1). CF(0) has three main subunits: a(1), b(2) and c(9-12). The alpha and beta chains form an alternating ring which encloses part of the gamma chain. CF(1) is attached to CF(0) by a central stalk formed by the gamma and epsilon chains, while a peripheral stalk is formed by the delta and b chains.

The protein resides in the cell membrane. The enzyme catalyses ATP + H2O + 4 H(+)(in) = ADP + phosphate + 5 H(+)(out). Produces ATP from ADP in the presence of a proton gradient across the membrane. The catalytic sites are hosted primarily by the beta subunits. This Desulfitobacterium hafniense (strain Y51) protein is ATP synthase subunit beta.